The primary structure comprises 285 residues: Putative sugar uptake protein lmo0169 (285 aa).

Transmembrane regions (helical) follow at residues 5–24 (IALI…SKIG), 31–48 (IIGT…VFIF), 53–71 (YTAT…WSLG), 84–106 (VSKT…GVFA), 116–135 (LVLG…LTSY), 151–173 (IITL…WFDI), 178–195 (AILP…LFSI), 207–226 (WLNM…LLFS), 232–254 (IATG…ILFL), and 263–282 (LILV…MIGI).

It belongs to the GRP transporter (TC 2.A.7.5) family.

Its subcellular location is the cell membrane. The polypeptide is Putative sugar uptake protein lmo0169 (Listeria monocytogenes serovar 1/2a (strain ATCC BAA-679 / EGD-e)).